A 475-amino-acid chain; its full sequence is MLPILKNQGVKKDQNHIALKNDSCESSSPCFDHEGNKINFISLGCPRNLVDSEVMLGILLKAGYEVAPTLEEADYLVINTCGFLEASRQESMDTVEEVLSQRKKTAKLIVTGCMVQTHSDALKTTFPSIDYLLGSGDVEGILKAVQSTQKGQIISSARSYLEAGEVPRRLSTPKHYAYLKIAEGCRKRCAYCVIPTIKGPLKSKGKEQILKEFNLLLSQGVKEVILIAQDLGDYGKDQGAKKLTALLNLLQSMLEIKQAFWLRLLYLYPDEITDELIALMKSDSRICPYLDMPIQHVNNQILKSMRRATSKEDIIEIITKLRREIPNVAIRTSLIVGFPGETEEQFQELIQFVQDYPLENVGIFKFSREPGSHAYDLPNQISDEMKEDRYHRLMQVQKKVVKKNLKKMIGKKIAVVVEGYHPETELLMIGRHTGQCPDIDGQVLINDGRKVKAFGEIYTVEITDVADYDLVGHVI.

The region spanning 36–150 (NKINFISLGC…ILKAVQSTQK (115 aa)) is the MTTase N-terminal domain. Positions 45, 81, 113, 185, 189, and 192 each coordinate [4Fe-4S] cluster. In terms of domain architecture, Radical SAM core spans 171-403 (STPKHYAYLK…MQVQKKVVKK (233 aa)). Positions 406–475 (KKMIGKKIAV…ADYDLVGHVI (70 aa)) constitute a TRAM domain.

Belongs to the methylthiotransferase family. RimO subfamily. It depends on [4Fe-4S] cluster as a cofactor.

It is found in the cytoplasm. The enzyme catalyses L-aspartate(89)-[ribosomal protein uS12]-hydrogen + (sulfur carrier)-SH + AH2 + 2 S-adenosyl-L-methionine = 3-methylsulfanyl-L-aspartate(89)-[ribosomal protein uS12]-hydrogen + (sulfur carrier)-H + 5'-deoxyadenosine + L-methionine + A + S-adenosyl-L-homocysteine + 2 H(+). Catalyzes the methylthiolation of an aspartic acid residue of ribosomal protein uS12. This is Ribosomal protein uS12 methylthiotransferase RimO from Protochlamydia amoebophila (strain UWE25).